The chain runs to 344 residues: Arginase 2, chloroplastic/mitochondrial (344 aa).

A chloroplast and mitochondrion-targeting transit peptide spans 1–26 (MWKIGQRGVPYFQRLIAAPFTTLRSL). Mn(2+) is bound by residues H163, D187, H189, and D191. Substrate contacts are provided by residues 189 to 193 (HPDIY), 197 to 199 (EGN), and N228. The Mn(2+) site is built by D272 and D274. E315 contributes to the substrate binding site.

This sequence belongs to the arginase family. It depends on Mn(2+) as a cofactor. In terms of tissue distribution, expressed in vasculature of roots, root tips, leaves and cotyledons.

It localises to the mitochondrion. The protein localises to the plastid. The protein resides in the chloroplast. It catalyses the reaction L-arginine + H2O = urea + L-ornithine. The catalysed reaction is agmatine + H2O = urea + putrescine. Its pathway is nitrogen metabolism; urea cycle; L-ornithine and urea from L-arginine: step 1/1. It participates in amine and polyamine biosynthesis; putrescine biosynthesis via agmatine pathway; putrescine from agmatine: step 1/1. Functionally, catalyzes the hydrolysis of L-arginine to urea and L-ornithine. The latter can be utilized in the urea cycle or as a precursor for the synthesis of both polyamines and proline. Possesses agmatinase activity. Catalyzes the formation of putrescine from agmatine. This chain is Arginase 2, chloroplastic/mitochondrial (ARGAH2), found in Arabidopsis thaliana (Mouse-ear cress).